The sequence spans 190 residues: CASP-like protein 1E2 (190 aa).

The tract at residues 1 to 21 (MEHEGKNNMNGMEMEKGKREL) is disordered. The Cytoplasmic portion of the chain corresponds to 1-28 (MEHEGKNNMNGMEMEKGKRELGSRKGVE). Residues 29 to 49 (LTMRVLALILTMAAATVLGVA) traverse the membrane as a helical segment. Over 50–83 (KQTKVVSIKLIPTLPPLDITTTAKASYLSAFVYN) the chain is Extracellular. The chain crosses the membrane as a helical span at residues 84–104 (ISVNAIACGYTAISIAILMIS). At 105–111 (RGRRSKK) the chain is on the cytoplasmic side. Residues 112 to 132 (LLMVVLLGDLVMVALLFSGTG) traverse the membrane as a helical segment. At 133 to 163 (AASAIGLMGLHGNKHVMWKKVCGVFGKFCHR) the chain is on the extracellular side. Residues 164–184 (AAPSLPLTLLAAVVFMFLVVL) form a helical membrane-spanning segment. The Cytoplasmic portion of the chain corresponds to 185 to 190 (DAIKLP).

It belongs to the Casparian strip membrane proteins (CASP) family. In terms of assembly, homodimer and heterodimers.

Its subcellular location is the cell membrane. The polypeptide is CASP-like protein 1E2 (Arabidopsis thaliana (Mouse-ear cress)).